The sequence spans 128 residues: Large ribosomal subunit protein bL17 (128 aa).

This sequence belongs to the bacterial ribosomal protein bL17 family. Part of the 50S ribosomal subunit. Contacts protein L32.

The protein is Large ribosomal subunit protein bL17 of Edwardsiella ictaluri (strain 93-146).